The chain runs to 86 residues: Putative membrane protein insertion efficiency factor (86 aa).

Belongs to the UPF0161 family.

It localises to the cell inner membrane. Could be involved in insertion of integral membrane proteins into the membrane. The polypeptide is Putative membrane protein insertion efficiency factor (Pasteurella multocida (strain Pm70)).